The chain runs to 612 residues: Cytoplasmic dynein 1 intermediate chain 2 (612 aa).

Basic and acidic residues-rich tracts occupy residues 1 to 13 and 20 to 43; these read MSDK…ELER and QIRE…KKEA. Disordered stretches follow at residues 1–117 and 129–188; these read MSDK…MAKI and TYTK…EEKQ. Ser-2 is modified (N-acetylserine). At Ser-51 the chain carries Diphosphoserine. Residues Ser-51 and Ser-84 each carry the phosphoserine modification. Over residues 82-91 the composition is skewed to low complexity; sequence PSSKSVSTPS. Thr-89 bears the Phosphothreonine mark. A phosphoserine mark is found at Ser-91, Ser-95, and Ser-98. The span at 164–188 shows a compositional bias: basic and acidic residues; it reads EKTLKKDEESDSKAPPHELTEEEKQ. WD repeat units lie at residues 251-300, 304-344, 353-394, 403-443, 448-493, 496-536, and 542-581; these read SKHR…TTPE, HCQS…RTPV, AHTH…HPQD, SKAV…AGIS, GHQG…PLYS, DNSD…EVPT, and EGNP…AVPR.

This sequence belongs to the dynein intermediate chain family. As to quaternary structure, homodimer. The cytoplasmic dynein 1 complex consists of two catalytic heavy chains (HCs) and a number of non-catalytic subunits presented by intermediate chains (ICs), light intermediate chains (LICs) and light chains (LCs); the composition seems to vary in respect to the IC, LIC and LC composition. The heavy chain homodimer serves as a scaffold for the probable homodimeric assembly of the respective non-catalytic subunits. The ICs and LICs bind directly to the HC dimer and the LCs assemble on the IC dimer. Interacts with DYNLT3. Interacts with DYNLT1. Interacts (dephosphorylated at Ser-84) with DCTN1. Interacts with BICD2. Interacts with SPEF2. Interacts with CFAP61. Post-translationally, the phosphorylation status of Ser-84 appears to be involved in dynactin-dependent target binding. In terms of processing, pyrophosphorylation by 5-diphosphoinositol pentakisphosphate (5-IP7) promotes interaction with DCTN1. Serine pyrophosphorylation is achieved by Mg(2+)-dependent, but enzyme independent transfer of a beta-phosphate from a inositol pyrophosphate to a pre-phosphorylated serine residue.

The protein resides in the cytoplasm. The protein localises to the cytoskeleton. Acts as one of several non-catalytic accessory components of the cytoplasmic dynein 1 complex that are thought to be involved in linking dynein to cargos and to adapter proteins that regulate dynein function. Cytoplasmic dynein 1 acts as a motor for the intracellular retrograde motility of vesicles and organelles along microtubules. The intermediate chains mediate the binding of dynein to dynactin via its 150 kDa component (p150-glued) DCTN1. Involved in membrane-transport, such as Golgi apparatus, late endosomes and lysosomes. This is Cytoplasmic dynein 1 intermediate chain 2 (DYNC1I2) from Bos taurus (Bovine).